We begin with the raw amino-acid sequence, 1748 residues long: RANBP2-like and GRIP domain-containing protein 1 (1748 aa).

The residue at position 14 (Thr-14) is a Phosphothreonine. TPR repeat units lie at residues 51–84, 575–608, and 639–672; these read PRAH…NPPQ, QKMG…LKII, and EDAH…VSYW. Residues 751–796 form a disordered region; that stretch reads GPLYKNGSLRNADSEIKHSTPSPTKYSLSPSKSYKYSPKTPPRWAE. The span at 769–788 shows a compositional bias: low complexity; the sequence is STPSPTKYSLSPSKSYKYSP. A RanBD1 1 domain is found at 1021-1157; the sequence is HFEPVVQMPE…FEECQRLLLD (137 aa). Disordered stretches follow at residues 1198–1233 and 1291–1316; these read TKVT…TLEW and AKLN…ERDG. Polar residues predominate over residues 1220–1229; it reads IKPNPENTGP. The span at 1302–1314 shows a compositional bias: acidic residues; the sequence is TDEESDVTQEEER. The RanBD1 2 domain occupies 1318-1454; the sequence is YFEPVVPLPD…FDEAKTAQEK (137 aa). The span at 1565 to 1578 shows a compositional bias: polar residues; the sequence is NDSETSSVAQSGSE. Residues 1565–1606 form a disordered region; that stretch reads NDSETSSVAQSGSESKVEPKKCELSKNSDIEQSSDSKVKNLS. Over residues 1579-1602 the composition is skewed to basic and acidic residues; it reads SKVEPKKCELSKNSDIEQSSDSKV. In terms of domain architecture, GRIP spans 1685–1735; sequence QEESAANVEHLKNVLLQFIFLKPGSERESLLPVINTMLQLSPEEKGKLAAV.

The sequence is that of RANBP2-like and GRIP domain-containing protein 1 (RGPD1) from Homo sapiens (Human).